The chain runs to 517 residues: GMP synthase [glutamine-hydrolyzing] (517 aa).

Residues 11–202 (KIIVLDYGSQ…AFGVCGAQDN (192 aa)) enclose the Glutamine amidotransferase type-1 domain. Catalysis depends on cysteine 88, which acts as the Nucleophile. Residues histidine 176 and glutamate 178 contribute to the active site. A GMPS ATP-PPase domain is found at 203–392 (WTMNDFIDMQ…LGMPYELVWR (190 aa)). 230-236 (SGGVDSS) contributes to the ATP binding site.

As to quaternary structure, homodimer.

It catalyses the reaction XMP + L-glutamine + ATP + H2O = GMP + L-glutamate + AMP + diphosphate + 2 H(+). The protein operates within purine metabolism; GMP biosynthesis; GMP from XMP (L-Gln route): step 1/1. Functionally, catalyzes the synthesis of GMP from XMP. In Latilactobacillus sakei subsp. sakei (strain 23K) (Lactobacillus sakei subsp. sakei), this protein is GMP synthase [glutamine-hydrolyzing].